We begin with the raw amino-acid sequence, 36 residues long: Photosystem I reaction center subunit VIII (36 aa).

The chain crosses the membrane as a helical span at residues 9 to 29 (ILVPLVGLVFPAIAMASLFLY).

Belongs to the PsaI family.

The protein resides in the plastid. It localises to the chloroplast thylakoid membrane. In terms of biological role, may help in the organization of the PsaL subunit. This Oltmannsiellopsis viridis (Marine flagellate) protein is Photosystem I reaction center subunit VIII.